The sequence spans 258 residues: Phosphate import ATP-binding protein PstB (258 aa).

The ABC transporter domain maps to 5–247 (IDVSGLTAYY…ERIFSNPSVQ (243 aa)). 37 to 44 (GPSGCGKS) is an ATP binding site.

It belongs to the ABC transporter superfamily. Phosphate importer (TC 3.A.1.7) family. The complex is composed of two ATP-binding proteins (PstB), two transmembrane proteins (PstC and PstA) and a solute-binding protein (PstS).

The protein localises to the cell membrane. The catalysed reaction is phosphate(out) + ATP + H2O = ADP + 2 phosphate(in) + H(+). Part of the ABC transporter complex PstSACB involved in phosphate import. Responsible for energy coupling to the transport system. This chain is Phosphate import ATP-binding protein PstB, found in Streptomyces avermitilis (strain ATCC 31267 / DSM 46492 / JCM 5070 / NBRC 14893 / NCIMB 12804 / NRRL 8165 / MA-4680).